Consider the following 446-residue polypeptide: Exodeoxyribonuclease 7 large subunit (446 aa).

Belongs to the XseA family. In terms of assembly, heterooligomer composed of large and small subunits.

It is found in the cytoplasm. The catalysed reaction is Exonucleolytic cleavage in either 5'- to 3'- or 3'- to 5'-direction to yield nucleoside 5'-phosphates.. Bidirectionally degrades single-stranded DNA into large acid-insoluble oligonucleotides, which are then degraded further into small acid-soluble oligonucleotides. This chain is Exodeoxyribonuclease 7 large subunit, found in Streptococcus pyogenes serotype M6 (strain ATCC BAA-946 / MGAS10394).